Here is a 119-residue protein sequence, read N- to C-terminus: Ribonuclease P protein component (119 aa).

It belongs to the RnpA family. As to quaternary structure, consists of a catalytic RNA component (M1 or rnpB) and a protein subunit.

It catalyses the reaction Endonucleolytic cleavage of RNA, removing 5'-extranucleotides from tRNA precursor.. Its function is as follows. RNaseP catalyzes the removal of the 5'-leader sequence from pre-tRNA to produce the mature 5'-terminus. It can also cleave other RNA substrates such as 4.5S RNA. The protein component plays an auxiliary but essential role in vivo by binding to the 5'-leader sequence and broadening the substrate specificity of the ribozyme. The protein is Ribonuclease P protein component of Salmonella arizonae (strain ATCC BAA-731 / CDC346-86 / RSK2980).